The sequence spans 680 residues: Structure-specific endonuclease subunit SLX4 (680 aa).

Disordered regions lie at residues 15 to 92, 141 to 183, and 450 to 490; these read EVAK…EPVV, ESSS…STQQ, and LGSG…ATRL. Residues 22–33 are compositionally biased toward acidic residues; sequence DSDEPIIDEDDL. Over residues 60 to 86 the composition is skewed to basic and acidic residues; that stretch reads NNSKDTFKETPLELVDKEEAIEDKAPN. A compositionally biased stretch (basic residues) spans 156 to 174; that stretch reads LKSKKITKPKLTKTSKRTK. The span at 473-490 shows a compositional bias: polar residues; sequence TVISRSPQSTRTPQATRL.

Belongs to the SLX4 family. In terms of assembly, forms a heterodimer with SLX1. Phosphorylated in response to DNA damage.

Its subcellular location is the nucleus. Its function is as follows. Regulatory subunit of the SLX1-SLX4 structure-specific endonuclease that resolves DNA secondary structures generated during DNA repair and recombination. Has endonuclease activity towards branched DNA substrates, introducing single-strand cuts in duplex DNA close to junctions with ss-DNA. In Vanderwaltozyma polyspora (strain ATCC 22028 / DSM 70294 / BCRC 21397 / CBS 2163 / NBRC 10782 / NRRL Y-8283 / UCD 57-17) (Kluyveromyces polysporus), this protein is Structure-specific endonuclease subunit SLX4.